Here is a 250-residue protein sequence, read N- to C-terminus: Ubiquinone/menaquinone biosynthesis C-methyltransferase UbiE (250 aa).

Residues Ser-73, Asp-94, and 122 to 123 each bind S-adenosyl-L-methionine; that span reads NA.

It belongs to the class I-like SAM-binding methyltransferase superfamily. MenG/UbiE family.

The catalysed reaction is a 2-demethylmenaquinol + S-adenosyl-L-methionine = a menaquinol + S-adenosyl-L-homocysteine + H(+). It carries out the reaction a 2-methoxy-6-(all-trans-polyprenyl)benzene-1,4-diol + S-adenosyl-L-methionine = a 5-methoxy-2-methyl-3-(all-trans-polyprenyl)benzene-1,4-diol + S-adenosyl-L-homocysteine + H(+). It functions in the pathway quinol/quinone metabolism; menaquinone biosynthesis; menaquinol from 1,4-dihydroxy-2-naphthoate: step 2/2. The protein operates within cofactor biosynthesis; ubiquinone biosynthesis. Methyltransferase required for the conversion of demethylmenaquinol (DMKH2) to menaquinol (MKH2) and the conversion of 2-polyprenyl-6-methoxy-1,4-benzoquinol (DDMQH2) to 2-polyprenyl-3-methyl-6-methoxy-1,4-benzoquinol (DMQH2). In Legionella pneumophila (strain Paris), this protein is Ubiquinone/menaquinone biosynthesis C-methyltransferase UbiE.